A 216-amino-acid polypeptide reads, in one-letter code: Vesicle-associated membrane protein 7A (216 aa).

Residues 1 to 189 (MSQTDILYAC…KRKLWWQNKK (189 aa)) lie on the Cytoplasmic side of the membrane. The 107-residue stretch at 6–112 (ILYACVSYKG…ATYDPFIRVL (107 aa)) folds into the Longin domain. Residues 126 to 186 (KMNLVMDQVS…VALKRKLWWQ (61 aa)) form the v-SNARE coiled-coil homology domain. A helical; Anchor for type IV membrane protein transmembrane segment spans residues 190-210 (LAIAIGLVVCILIAVITLALL). Residues 211-216 (KYFKVI) are Vesicular-facing.

Belongs to the synaptobrevin family. As to quaternary structure, component of the SNARE complex composed of syn7A, syn8A, vamp7A and vti1A.

Its subcellular location is the cytoplasmic vesicle. The protein resides in the secretory vesicle membrane. It is found in the golgi apparatus. It localises to the trans-Golgi network membrane. The protein localises to the late endosome membrane. Its subcellular location is the lysosome membrane. The protein resides in the endoplasmic reticulum membrane. It is found in the phagosome membrane. Functionally, involved in the targeting and/or fusion of transport vesicles to their target membrane during transport of proteins from the early endosome to the lysosome. Required for heterotypic fusion of late endosomes with lysosomes and homotypic lysosomal fusion. Required for calcium regulated lysosomal exocytosis. This chain is Vesicle-associated membrane protein 7A, found in Dictyostelium discoideum (Social amoeba).